A 984-amino-acid polypeptide reads, in one-letter code: MYCBP-associated protein (984 aa).

2 disordered regions span residues Leu-61–Glu-88 and Gly-218–Asn-240. The span at Gly-218–Pro-231 shows a compositional bias: basic and acidic residues. Residue Thr-613 is modified to Phosphothreonine. Ser-619 is modified (phosphoserine). Disordered stretches follow at residues Ser-693–Met-729 and Pro-842–Asp-917. Residues Ala-862–Val-910 show a composition bias toward basic and acidic residues.

In terms of assembly, interacts with MYCBP. Expressed specifically in testis.

It localises to the cytoplasm. The protein localises to the membrane. In terms of biological role, may play a role in spermatogenesis. May be involved in synaptic processes. The protein is MYCBP-associated protein of Homo sapiens (Human).